Reading from the N-terminus, the 395-residue chain is Protein phosphatase PP2A regulatory subunit A (395 aa).

HEAT repeat units follow at residues 44–81 (DCLAHILPVIVNFSQDKSWRVRYMVANQLYELCEAVGP), 83–120 (STKTELVPAYVRLLRDNVAEVRIAAAGKVSKFSRILSP), 122–159 (LAIQHILPCVKELSTDSSQHVRSALASVIMGMAPVLGK), 161–198 (ATIEQLLPIFLSLLKDEFPDVRLNIISKLDQVNQVIGI), 200–237 (LLSQSLLPAIVELAEDRHWRVRLAIIEYIPLLASQLGV), 239–276 (FFDDKLGALIMQWLKDKEYSIRNAAANNVKRLAAEEFG), 279–316 (WAMQHIIPQVLDMINDPHYLYRMTILHAISLLAPVLGS), and 318–355 (ITSTNLLPLVVNASKDRVPNIKFNVAKVLQSLIPIVDE).

This sequence belongs to the phosphatase 2A regulatory subunit A family. As to quaternary structure, PP2A exists in several trimeric forms, all of which consist of a core composed of a catalytic subunit associated with a 65 kDa regulatory subunit (PR65) (subunit A). The core complex associates with a third, variable subunit (subunit B), which confers distinct properties to the holoenzyme.

Functionally, the PR65 subunit of protein phosphatase 2A serves as a scaffolding molecule to coordinate the assembly of the catalytic subunit and a variable regulatory B subunit. The protein is Protein phosphatase PP2A regulatory subunit A of Pisum sativum (Garden pea).